The chain runs to 218 residues: Probable transaldolase (218 aa).

Lys-87 acts as the Schiff-base intermediate with substrate in catalysis.

It belongs to the transaldolase family. Type 3B subfamily.

It is found in the cytoplasm. The enzyme catalyses D-sedoheptulose 7-phosphate + D-glyceraldehyde 3-phosphate = D-erythrose 4-phosphate + beta-D-fructose 6-phosphate. It participates in carbohydrate degradation; pentose phosphate pathway; D-glyceraldehyde 3-phosphate and beta-D-fructose 6-phosphate from D-ribose 5-phosphate and D-xylulose 5-phosphate (non-oxidative stage): step 2/3. Functionally, transaldolase is important for the balance of metabolites in the pentose-phosphate pathway. This Cytophaga hutchinsonii (strain ATCC 33406 / DSM 1761 / CIP 103989 / NBRC 15051 / NCIMB 9469 / D465) protein is Probable transaldolase.